The sequence spans 396 residues: 1-deoxy-D-xylulose 5-phosphate reductoisomerase (396 aa).

NADPH-binding residues include Thr13, Gly14, Ser15, Ile16, and Asn127. Lys128 lines the 1-deoxy-D-xylulose 5-phosphate pocket. Glu129 contributes to the NADPH binding site. Asp153 contributes to the Mn(2+) binding site. Residues Ser154, Glu155, Ser184, and His207 each contribute to the 1-deoxy-D-xylulose 5-phosphate site. Residue Glu155 participates in Mn(2+) binding. Gly213 provides a ligand contact to NADPH. 1-deoxy-D-xylulose 5-phosphate-binding residues include Ser220, Asn225, Lys226, and Glu229. Glu229 lines the Mn(2+) pocket.

This sequence belongs to the DXR family. It depends on Mg(2+) as a cofactor. The cofactor is Mn(2+).

The enzyme catalyses 2-C-methyl-D-erythritol 4-phosphate + NADP(+) = 1-deoxy-D-xylulose 5-phosphate + NADPH + H(+). Its pathway is isoprenoid biosynthesis; isopentenyl diphosphate biosynthesis via DXP pathway; isopentenyl diphosphate from 1-deoxy-D-xylulose 5-phosphate: step 1/6. Functionally, catalyzes the NADPH-dependent rearrangement and reduction of 1-deoxy-D-xylulose-5-phosphate (DXP) to 2-C-methyl-D-erythritol 4-phosphate (MEP). This is 1-deoxy-D-xylulose 5-phosphate reductoisomerase from Pseudomonas putida (strain W619).